The sequence spans 1053 residues: Putative ABC transporter C family member 15 (1053 aa).

The 180-residue stretch at Met-1 to Gln-180 folds into the ABC transmembrane type-1 1 domain. A run of 4 helical transmembrane segments spans residues Phe-11 to Ile-31, Leu-36 to Pro-56, Phe-125 to Met-145, and Ala-151 to Leu-171. Residues Val-214–Cys-437 form the ABC transporter 1 domain. Residue Gly-249–Ser-256 coordinates ATP. Transmembrane regions (helical) follow at residues Leu-481–Trp-503, Ile-523–Ile-543, Met-595–Val-615, Leu-714–Ile-734, and Ile-738–Trp-758. The ABC transmembrane type-1 2 domain occupies Val-483–Asn-765. An ABC transporter 2 domain is found at Phe-804–Lys-1036. Gly-836–Ser-843 is an ATP binding site.

The protein belongs to the ABC transporter superfamily. ABCC family. Conjugate transporter (TC 3.A.1.208) subfamily.

The protein localises to the membrane. The enzyme catalyses ATP + H2O + xenobioticSide 1 = ADP + phosphate + xenobioticSide 2.. Its function is as follows. Pump for glutathione S-conjugates. The chain is Putative ABC transporter C family member 15 (ABCC15) from Arabidopsis thaliana (Mouse-ear cress).